The following is a 241-amino-acid chain: Biosynthetic peptidoglycan transglycosylase (241 aa).

A helical membrane pass occupies residues 18 to 38 (GVIGIIALWMAGILIFAFLPV).

This sequence belongs to the glycosyltransferase 51 family.

The protein localises to the cell inner membrane. The catalysed reaction is [GlcNAc-(1-&gt;4)-Mur2Ac(oyl-L-Ala-gamma-D-Glu-L-Lys-D-Ala-D-Ala)](n)-di-trans,octa-cis-undecaprenyl diphosphate + beta-D-GlcNAc-(1-&gt;4)-Mur2Ac(oyl-L-Ala-gamma-D-Glu-L-Lys-D-Ala-D-Ala)-di-trans,octa-cis-undecaprenyl diphosphate = [GlcNAc-(1-&gt;4)-Mur2Ac(oyl-L-Ala-gamma-D-Glu-L-Lys-D-Ala-D-Ala)](n+1)-di-trans,octa-cis-undecaprenyl diphosphate + di-trans,octa-cis-undecaprenyl diphosphate + H(+). The protein operates within cell wall biogenesis; peptidoglycan biosynthesis. Functionally, peptidoglycan polymerase that catalyzes glycan chain elongation from lipid-linked precursors. In Yersinia pseudotuberculosis serotype O:1b (strain IP 31758), this protein is Biosynthetic peptidoglycan transglycosylase.